The primary structure comprises 141 residues: Hemoglobin subunit alpha (141 aa).

The Globin domain maps to Val1–Arg141. At Ser3 the chain carries Phosphoserine. The residue at position 7 (Lys7) is an N6-succinyllysine. Thr8 carries the post-translational modification Phosphothreonine. Residue Lys11 is modified to N6-succinyllysine. Lys16 carries the post-translational modification N6-acetyllysine; alternate. At Lys16 the chain carries N6-succinyllysine; alternate. Tyr24 is modified (phosphotyrosine). At Ser35 the chain carries Phosphoserine. N6-succinyllysine is present on Lys40. Ser49 is modified (phosphoserine). His58 provides a ligand contact to O2. His87 serves as a coordination point for heme b. At Ser102 the chain carries Phosphoserine. Thr108 carries the phosphothreonine modification. Ser124 bears the Phosphoserine mark. A phosphothreonine mark is found at Thr134 and Thr137. Ser138 bears the Phosphoserine mark.

It belongs to the globin family. Heterotetramer of two alpha chains and two beta chains. In terms of tissue distribution, red blood cells.

Its function is as follows. Involved in oxygen transport from the lung to the various peripheral tissues. This chain is Hemoglobin subunit alpha, found in Tamias merriami (Merriam's chipmunk).